We begin with the raw amino-acid sequence, 962 residues long: Translation initiation factor IF-2 (962 aa).

The interval 101–366 is disordered; it reads AAQTQAAPVR…KKGKKLKLEP (266 aa). A compositionally biased stretch (basic and acidic residues) spans 117 to 141; that stretch reads DAAKARAEAATRAEARAKAEAEAAK. A compositionally biased stretch (low complexity) spans 145 to 157; the sequence is AKAGNKAKPAAQK. Positions 173–216 are enriched in basic and acidic residues; that stretch reads KPAEESKAEKAQADKMPSKKPAEPKEKAAKPKHERNGKGKDAKK. Residues 219–234 show a composition bias toward low complexity; it reads KPAAPAVPQPVVSAEE. Residues 235–269 are compositionally biased toward basic and acidic residues; it reads QAQRDEEARRAAALRAHQEALLKEKQERQARREAM. A compositionally biased stretch (low complexity) spans 270-283; that stretch reads KQQAEQQAKAAQEA. Over residues 338–354 the composition is skewed to basic and acidic residues; sequence GGRDRNNARNGDDERVR. The 170-residue stretch at 462-631 folds into the tr-type G domain; sequence PRPPVVTVMG…LLEAEVLELT (170 aa). The G1 stretch occupies residues 471-478; sequence GHVDHGKT. 471-478 is a GTP binding site; sequence GHVDHGKT. The interval 496 to 500 is G2; the sequence is GITQH. The G3 stretch occupies residues 517–520; that stretch reads DTPG. Residues 517–521 and 571–574 contribute to the GTP site; these read DTPGH and NKID. The interval 571–574 is G4; the sequence is NKID. Residues 607 to 609 are G5; the sequence is SAK.

Belongs to the TRAFAC class translation factor GTPase superfamily. Classic translation factor GTPase family. IF-2 subfamily.

The protein localises to the cytoplasm. Its function is as follows. One of the essential components for the initiation of protein synthesis. Protects formylmethionyl-tRNA from spontaneous hydrolysis and promotes its binding to the 30S ribosomal subunits. Also involved in the hydrolysis of GTP during the formation of the 70S ribosomal complex. The sequence is that of Translation initiation factor IF-2 from Neisseria meningitidis serogroup A / serotype 4A (strain DSM 15465 / Z2491).